A 156-amino-acid chain; its full sequence is ATP synthase subunit b (156 aa).

The helical transmembrane segment at 13–33 (AFIIFVWFCMKFVWPPLMNAI) threads the bilayer.

Belongs to the ATPase B chain family. As to quaternary structure, F-type ATPases have 2 components, F(1) - the catalytic core - and F(0) - the membrane proton channel. F(1) has five subunits: alpha(3), beta(3), gamma(1), delta(1), epsilon(1). F(0) has three main subunits: a(1), b(2) and c(10-14). The alpha and beta chains form an alternating ring which encloses part of the gamma chain. F(1) is attached to F(0) by a central stalk formed by the gamma and epsilon chains, while a peripheral stalk is formed by the delta and b chains.

It localises to the cell inner membrane. Its function is as follows. F(1)F(0) ATP synthase produces ATP from ADP in the presence of a proton or sodium gradient. F-type ATPases consist of two structural domains, F(1) containing the extramembraneous catalytic core and F(0) containing the membrane proton channel, linked together by a central stalk and a peripheral stalk. During catalysis, ATP synthesis in the catalytic domain of F(1) is coupled via a rotary mechanism of the central stalk subunits to proton translocation. Functionally, component of the F(0) channel, it forms part of the peripheral stalk, linking F(1) to F(0). The polypeptide is ATP synthase subunit b (Shewanella sediminis (strain HAW-EB3)).